We begin with the raw amino-acid sequence, 90 residues long: Probable Fe(2+)-trafficking protein (90 aa).

This sequence belongs to the Fe(2+)-trafficking protein family.

Its function is as follows. Could be a mediator in iron transactions between iron acquisition and iron-requiring processes, such as synthesis and/or repair of Fe-S clusters in biosynthetic enzymes. This Dechloromonas aromatica (strain RCB) protein is Probable Fe(2+)-trafficking protein.